Reading from the N-terminus, the 303-residue chain is E3 ubiquitin-protein ligase SINA-like 3 (303 aa).

The disordered stretch occupies residues 1-30 (MENITNNSERSLDRPKRQRPVSMENVGGTA). An RING-type zinc finger spans residues 49-85 (CPICYHKLGAPIYQCDNGHIACSSCCKKVKYKCPYCS). Positions 99–286 (IVEAVVVSCP…MSIPYYLLDE (188 aa)) are SBD. The segment at 102 to 162 (AVVVSCPNAK…LYRHYHAEHK (61 aa)) adopts an SIAH-type zinc-finger fold. Cysteine 107, cysteine 114, histidine 128, cysteine 132, cysteine 139, cysteine 144, histidine 156, and histidine 161 together coordinate Zn(2+).

It belongs to the SINA (Seven in absentia) family.

It catalyses the reaction S-ubiquitinyl-[E2 ubiquitin-conjugating enzyme]-L-cysteine + [acceptor protein]-L-lysine = [E2 ubiquitin-conjugating enzyme]-L-cysteine + N(6)-ubiquitinyl-[acceptor protein]-L-lysine.. Its pathway is protein modification; protein ubiquitination. In terms of biological role, E3 ubiquitin-protein ligase that mediates ubiquitination and subsequent proteasomal degradation of target proteins. E3 ubiquitin ligases accept ubiquitin from an E2 ubiquitin-conjugating enzyme in the form of a thioester and then directly transfers the ubiquitin to targeted substrates. It probably triggers the ubiquitin-mediated degradation of different substrates. This chain is E3 ubiquitin-protein ligase SINA-like 3, found in Arabidopsis thaliana (Mouse-ear cress).